The sequence spans 581 residues: MLKKNFSTWRIFCRLWPIISPFKSGLIISIVALIINATSDTLMLSLLKPLLDNGFKSSENKISIWMPLAIVALMLSRGSSGFISSYFISWVSGKVVMNIRRNLFRHMMNMPVSFFDKRSTGALLSRITYDTEQVASSSSSVLITIVREGSLIIGLFFMMFFHSWKLSSVLIIITPIVFFSINQVSKRFRKINKKIQNNMGQVNFIVEQMLKGHKEIRIFGGQKEEIDRFNYVSNFIRQQSMKIVISSSTLDIIIQFISSITLAVILYISSLPKIIDELTAGTITVIFTSMIALMRPLKSLTNVNANFQKGMVACKTLFSIFDIKQEQDIGKCYINRARGEIKFKNITFTYPGKENPSLKDINIKISAGCTVALIGSSGAGKSTIVNLLTRFYEADKGSIFLDNINLKKYKLSNLRNQIALVSQNIYLFNDTIANNIAYAKKKIYSKYQIEKAAYMAYAMDFIIKMKHGLNTIIGENGTLLSGGQRQRIAIARALLRDCPILILDEATSALDIESEIKVQKAIDKIRKNRTSLVIAHRISTIKKSDMILLVEKGKIIEYGNHNELIEKKGVYAQIYRLQLDQ.

A run of 5 helical transmembrane segments spans residues 15 to 35, 62 to 82, 152 to 172, 252 to 272, and 274 to 294; these read LWPIISPFKSGLIISIVALII, ISIWMPLAIVALMLSRGSSGF, IIGLFFMMFFHSWKLSSVLII, IIIQFISSITLAVILYISSLP, and IIDELTAGTITVIFTSMIALM. The ABC transmembrane type-1 domain occupies 27-309; it reads IISIVALIIN…LTNVNANFQK (283 aa). Residues 341–577 form the ABC transporter domain; sequence IKFKNITFTY…KGVYAQIYRL (237 aa). 375 to 382 contacts ATP; it reads GSSGAGKS.

It belongs to the ABC transporter superfamily. Lipid exporter (TC 3.A.1.106) family. Homodimer.

The protein resides in the cell membrane. The enzyme catalyses ATP + H2O + lipid A-core oligosaccharideSide 1 = ADP + phosphate + lipid A-core oligosaccharideSide 2.. Functionally, involved in lipopolysaccharide (LPS) biosynthesis. Translocates lipid A-core from the inner to the outer leaflet of the inner membrane. Transmembrane domains (TMD) form a pore in the inner membrane and the ATP-binding domain (NBD) is responsible for energy generation. The polypeptide is ATP-dependent lipid A-core flippase (Wigglesworthia glossinidia brevipalpis).